The sequence spans 83 residues: Small ribosomal subunit protein uS17 (83 aa).

The protein belongs to the universal ribosomal protein uS17 family. In terms of assembly, part of the 30S ribosomal subunit.

One of the primary rRNA binding proteins, it binds specifically to the 5'-end of 16S ribosomal RNA. The chain is Small ribosomal subunit protein uS17 from Gloeobacter violaceus (strain ATCC 29082 / PCC 7421).